A 190-amino-acid polypeptide reads, in one-letter code: Putative transcription factor ovo-like protein 3 (190 aa).

Disordered regions lie at residues 1–21 (MPRAFLVRSRRPQPPNWGHLP) and 35–65 (SLGGPPAQQSSSVRDPWTAQPTQGNLTSAPR). Positions 41–62 (AQQSSSVRDPWTAQPTQGNLTS) are enriched in polar residues. C2H2-type zinc fingers lie at residues 70-92 (LGCPLCPKAFPLQRMLTRHLKCH), 98-120 (HLCRCCGKGFHDAFDLKRHMRTH), 126-149 (FRCSACGKAFTQRCSLEAHLAKVH), and 165-187 (HVCEDCGFTSSRPDTYAQHRALH).

It belongs to the krueppel C2H2-type zinc-finger protein family.

It is found in the nucleus. Its function is as follows. May act as a transcription regulator. This Homo sapiens (Human) protein is Putative transcription factor ovo-like protein 3 (OVOL3).